The chain runs to 1120 residues: Phosphatidylinositide phosphatase SAC2 (1120 aa).

Residues 167–518 (YKIFMDSDSF…GDTISRQYAG (352 aa)) form the SAC domain. Positions 593–760 (RGAQEQVSLL…RHSKPHEDIM (168 aa)) constitute a hSac2 domain. 2 disordered regions span residues 837–881 (SSLE…SREN) and 979–1008 (PAPK…LPRP). A compositionally biased stretch (basic and acidic residues) spans 851-860 (LKDHGPHSEE). Polar residues-rich tracts occupy residues 864–879 (DSDS…SGSR) and 998–1007 (SSHSQNQLPR).

It is found in the membrane. The protein localises to the clathrin-coated pit. It localises to the early endosome. Its subcellular location is the recycling endosome. It catalyses the reaction a myo-inositol phosphate + H2O = myo-inositol + phosphate. In terms of biological role, inositol 4-phosphatase which mainly acts on phosphatidylinositol 4-phosphate. May be functionally linked to OCRL, which converts phosphatidylinositol 4,5-bisphosphate to phosphatidylinositol, for a sequential dephosphorylation of phosphatidylinositol 4,5-bisphosphate at the 5 and 4 position of inositol, thus playing an important role in the endocytic recycling. The polypeptide is Phosphatidylinositide phosphatase SAC2 (Danio rerio (Zebrafish)).